A 524-amino-acid chain; its full sequence is Peptide chain release factor 3 (524 aa).

Residues 11 to 278 enclose the tr-type G domain; that stretch reads AKRRTFAIIS…SFVQYAPEPG (268 aa). Residues 20-27, 88-92, and 142-145 each bind GTP; these read SHPDAGKT, DTPGH, and NKLD.

Belongs to the TRAFAC class translation factor GTPase superfamily. Classic translation factor GTPase family. PrfC subfamily.

The protein localises to the cytoplasm. In terms of biological role, increases the formation of ribosomal termination complexes and stimulates activities of RF-1 and RF-2. It binds guanine nucleotides and has strong preference for UGA stop codons. It may interact directly with the ribosome. The stimulation of RF-1 and RF-2 is significantly reduced by GTP and GDP, but not by GMP. The chain is Peptide chain release factor 3 from Lacticaseibacillus casei (strain BL23) (Lactobacillus casei).